We begin with the raw amino-acid sequence, 173 residues long: Small ribosomal subunit protein uS5 (173 aa).

An S5 DRBM domain is found at 18 to 81 (LREKMIAVNR…EQARRGMFKV (64 aa)).

This sequence belongs to the universal ribosomal protein uS5 family. Part of the 30S ribosomal subunit. Contacts proteins S4 and S8.

In terms of biological role, with S4 and S12 plays an important role in translational accuracy. Its function is as follows. Located at the back of the 30S subunit body where it stabilizes the conformation of the head with respect to the body. The polypeptide is Small ribosomal subunit protein uS5 (Bordetella petrii (strain ATCC BAA-461 / DSM 12804 / CCUG 43448)).